We begin with the raw amino-acid sequence, 201 residues long: Putative ankyrin repeat protein YahD (201 aa).

6 ANK repeats span residues 5–34 (NLPA…DINT), 38–67 (QGKT…DINK), 71–100 (TCLN…DLNC), 104–134 (FGGV…NVNQ), 138–172 (VGWT…SPHL), and 176–201 (YGKT…AAGA).

The polypeptide is Putative ankyrin repeat protein YahD (yahD) (Escherichia coli (strain K12)).